Reading from the N-terminus, the 178-residue chain is ATP-dependent protease subunit HslV (178 aa).

Thr-5 is a catalytic residue. Na(+) contacts are provided by Gly-161, Cys-164, and Thr-167.

This sequence belongs to the peptidase T1B family. HslV subfamily. A double ring-shaped homohexamer of HslV is capped on each side by a ring-shaped HslU homohexamer. The assembly of the HslU/HslV complex is dependent on binding of ATP.

The protein resides in the cytoplasm. It catalyses the reaction ATP-dependent cleavage of peptide bonds with broad specificity.. With respect to regulation, allosterically activated by HslU binding. Protease subunit of a proteasome-like degradation complex believed to be a general protein degrading machinery. The polypeptide is ATP-dependent protease subunit HslV (Nitratiruptor sp. (strain SB155-2)).